Consider the following 420-residue polypeptide: uncharacterized protein (420 aa).

This is an uncharacterized protein from Encephalitozoon cuniculi (strain GB-M1) (Microsporidian parasite).